The following is a 187-amino-acid chain: MISSNDFRTGTSIVMDGAVWKVVEFLHVKPGKGSAFVRTKLKSVQTGNVVEKTFRAGETVPQANIEKSVMQHTYKDGDQYVFMDMETFEEVSIAPDTLGDKAKFIKEEMEVSVVTWDGTILDVELPTSVVLEIVETDPGVKGDTATGGTKPAILETGAQVMVPLFIAQGERIKVDTRDGSYLGRDNA.

Belongs to the elongation factor P family.

The protein localises to the cytoplasm. The protein operates within protein biosynthesis; polypeptide chain elongation. Functionally, involved in peptide bond synthesis. Stimulates efficient translation and peptide-bond synthesis on native or reconstituted 70S ribosomes in vitro. Probably functions indirectly by altering the affinity of the ribosome for aminoacyl-tRNA, thus increasing their reactivity as acceptors for peptidyl transferase. This chain is Elongation factor P (efp), found in Synechocystis sp. (strain ATCC 27184 / PCC 6803 / Kazusa).